A 365-amino-acid chain; its full sequence is 3-dehydroquinate synthase (365 aa).

Residues 75 to 80 (DAENGK), 109 to 113 (GAATD), 133 to 134 (TT), K146, and K155 each bind NAD(+). Residues E188, H253, and H269 each coordinate Zn(2+).

The protein belongs to the sugar phosphate cyclases superfamily. Dehydroquinate synthase family. Co(2+) serves as cofactor. The cofactor is Zn(2+). Requires NAD(+) as cofactor.

It localises to the cytoplasm. The catalysed reaction is 7-phospho-2-dehydro-3-deoxy-D-arabino-heptonate = 3-dehydroquinate + phosphate. Its pathway is metabolic intermediate biosynthesis; chorismate biosynthesis; chorismate from D-erythrose 4-phosphate and phosphoenolpyruvate: step 2/7. Its function is as follows. Catalyzes the conversion of 3-deoxy-D-arabino-heptulosonate 7-phosphate (DAHP) to dehydroquinate (DHQ). The sequence is that of 3-dehydroquinate synthase from Corynebacterium glutamicum (strain R).